Here is a 72-residue protein sequence, read N- to C-terminus: Conotoxin LiC53 (72 aa).

Positions 1–23 (MEKLTSLLLVAALLMLTQTLIQG) are cleaved as a signal peptide. A propeptide spanning residues 24–41 (GGEDRPNKKFLQKIKSTA) is cleaved from the precursor. 3 cysteine pairs are disulfide-bonded: cysteine 45-cysteine 59, cysteine 52-cysteine 63, and cysteine 58-cysteine 68.

Belongs to the conotoxin O2 superfamily. Expressed by the venom duct.

The protein localises to the secreted. The protein is Conotoxin LiC53 of Conus lividus (Livid cone).